Consider the following 432-residue polypeptide: Neuronal pentraxin-1 (432 aa).

The signal sequence occupies residues Met-1 to Ala-22. Residues Glu-90–Glu-128 are disordered. 2 N-linked (GlcNAc...) asparagine glycosylation sites follow: Asn-154 and Asn-193. A Pentraxin (PTX) domain is found at Asp-226–Cys-428. The cysteines at positions 256 and 316 are disulfide-linked. The Ca(2+) site is built by Asn-280, Glu-358, Gln-359, Asp-360, and Gln-370.

As to quaternary structure, homooligomer or heterooligomer (probably pentamer) with neuronal pentraxin receptor (NPTXR). Ca(2+) serves as cofactor. In terms of processing, glycosylated. In terms of tissue distribution, cerebellum, hippocampus and cerebral cortex.

The protein resides in the secreted. It is found in the cytoplasmic vesicle. It localises to the secretory vesicle. Its subcellular location is the endoplasmic reticulum. Its function is as follows. May be involved in mediating uptake of synaptic material during synapse remodeling or in mediating the synaptic clustering of AMPA glutamate receptors at a subset of excitatory synapses. This is Neuronal pentraxin-1 (Nptx1) from Rattus norvegicus (Rat).